Here is a 519-residue protein sequence, read N- to C-terminus: 2-isopropylmalate synthase (519 aa).

The Pyruvate carboxyltransferase domain occupies 12-274; that stretch reads IRIFDTTLRD…DTSIHTSRIV (263 aa). Mn(2+) is bound by residues Asp21, His209, His211, and Asn245. A regulatory domain region spans residues 396–519; it reads RLASMTISDV…MQNKQNTALA (124 aa).

It belongs to the alpha-IPM synthase/homocitrate synthase family. LeuA type 1 subfamily. In terms of assembly, homodimer. Requires Mn(2+) as cofactor.

It is found in the cytoplasm. It catalyses the reaction 3-methyl-2-oxobutanoate + acetyl-CoA + H2O = (2S)-2-isopropylmalate + CoA + H(+). It functions in the pathway amino-acid biosynthesis; L-leucine biosynthesis; L-leucine from 3-methyl-2-oxobutanoate: step 1/4. Catalyzes the condensation of the acetyl group of acetyl-CoA with 3-methyl-2-oxobutanoate (2-ketoisovalerate) to form 3-carboxy-3-hydroxy-4-methylpentanoate (2-isopropylmalate). The chain is 2-isopropylmalate synthase from Xylella fastidiosa (strain M23).